Reading from the N-terminus, the 440-residue chain is Transposon Ty1-LR4 Gag polyprotein (440 aa).

Polar residues-rich tracts occupy residues 1–10, 48–60, and 127–152; these read MESQQLSQHP, TKAN…TPAS, and QSQF…GNTF. Disordered stretches follow at residues 1 to 93, 126 to 173, and 352 to 440; these read MESQ…MMTQ, PQSQ…RPPP, and GSRN…PGTY. A compositionally biased stretch (low complexity) spans 153 to 165; sequence TDSSSADSDMTST. Positions 299–401 are RNA-binding; that stretch reads NNGIHINNKV…NSKSKTARAH (103 aa). A compositionally biased stretch (low complexity) spans 402 to 418; it reads NVSTSNNSPSTDNDSIS. Ser-416 bears the Phosphoserine mark. The span at 419 to 428 shows a compositional bias: polar residues; the sequence is KSTTEPIQLN. The span at 429 to 440 shows a compositional bias: basic and acidic residues; the sequence is NKHDLHLRPGTY.

Homotrimer.

It localises to the cytoplasm. In terms of biological role, capsid protein (CA) is the structural component of the virus-like particle (VLP), forming the shell that encapsulates the retrotransposons dimeric RNA genome. The particles are assembled from trimer-clustered units and there are holes in the capsid shells that allow for the diffusion of macromolecules. CA also has nucleocapsid-like chaperone activity, promoting primer tRNA(i)-Met annealing to the multipartite primer-binding site (PBS), dimerization of Ty1 RNA and initiation of reverse transcription. In Saccharomyces cerevisiae (strain ATCC 204508 / S288c) (Baker's yeast), this protein is Transposon Ty1-LR4 Gag polyprotein (TY1A-LR4).